We begin with the raw amino-acid sequence, 240 residues long: Putative exosome complex component RRP41 (240 aa).

This sequence belongs to the RNase PH family. In terms of assembly, component of the RNA exosome complex.

The protein resides in the cytoplasm. It is found in the nucleus. The protein localises to the nucleolus. Its subcellular location is the nucleoplasm. Its function is as follows. Non-catalytic component of the RNA exosome complex which has 3'-&gt;5' exoribonuclease activity and participates in a multitude of cellular RNA processing and degradation events. The sequence is that of Putative exosome complex component RRP41 (exos-4.1) from Caenorhabditis elegans.